The primary structure comprises 78 residues: Large ribosomal subunit protein bL28 (78 aa).

The segment at 1–21 (MSRVCQVTGKKPMVGNNRSHA) is disordered.

It belongs to the bacterial ribosomal protein bL28 family.

The sequence is that of Large ribosomal subunit protein bL28 from Shewanella baltica (strain OS223).